The sequence spans 110 residues: Insulin-2 (110 aa).

Positions 1-24 (MALWMRFLPLLALLFLWESHPTQA) are cleaved as a signal peptide. Intrachain disulfides connect C31-C96, C43-C109, and C95-C100. Residues 57-87 (EVEDPQVAQLELGGGPGAGDLQTLALEVAQQ) constitute a propeptide, c peptide.

Belongs to the insulin family. In terms of assembly, heterodimer of a B chain and an A chain linked by two disulfide bonds.

The protein localises to the secreted. Its function is as follows. Insulin decreases blood glucose concentration. It increases cell permeability to monosaccharides, amino acids and fatty acids. It accelerates glycolysis, the pentose phosphate cycle, and glycogen synthesis in liver. This is Insulin-2 (Ins2) from Mus musculus (Mouse).